A 167-amino-acid chain; its full sequence is NAD(P)H-quinone oxidoreductase subunit I, chloroplastic (167 aa).

2 4Fe-4S ferredoxin-type domains span residues 55–84 (GRIH…VDWK) and 95–124 (LNYS…MTEE). Residues Cys64, Cys67, Cys70, Cys74, Cys104, Cys107, Cys110, and Cys114 each coordinate [4Fe-4S] cluster.

The protein belongs to the complex I 23 kDa subunit family. In terms of assembly, NDH is composed of at least 16 different subunits, 5 of which are encoded in the nucleus. The cofactor is [4Fe-4S] cluster.

Its subcellular location is the plastid. The protein localises to the chloroplast thylakoid membrane. It catalyses the reaction a plastoquinone + NADH + (n+1) H(+)(in) = a plastoquinol + NAD(+) + n H(+)(out). The catalysed reaction is a plastoquinone + NADPH + (n+1) H(+)(in) = a plastoquinol + NADP(+) + n H(+)(out). In terms of biological role, NDH shuttles electrons from NAD(P)H:plastoquinone, via FMN and iron-sulfur (Fe-S) centers, to quinones in the photosynthetic chain and possibly in a chloroplast respiratory chain. The immediate electron acceptor for the enzyme in this species is believed to be plastoquinone. Couples the redox reaction to proton translocation, and thus conserves the redox energy in a proton gradient. The sequence is that of NAD(P)H-quinone oxidoreductase subunit I, chloroplastic from Lobularia maritima (Sweet alyssum).